Here is an 843-residue protein sequence, read N- to C-terminus: Translation initiation factor IF-2 (843 aa).

Disordered regions lie at residues 50–72 and 94–260; these read LKSS…KTTS and QRSP…TGPV. The segment covering 96–135 has biased composition (basic and acidic residues); the sequence is SPEEIQAEQKREQDERRAAENAARDKVDADVRQRNEEQAR. Residues 139 to 173 are compositionally biased toward low complexity; the sequence is TATAAAAPAAKAEPAPAAAAPAPAPVVADAPASED. 2 stretches are compositionally biased toward basic and acidic residues: residues 174 to 203 and 227 to 236; these read AAAR…RGEA and TTDEESDGAR. A compositionally biased stretch (basic residues) spans 237–250; sequence RGRGGKGKLKKRNQ. One can recognise a tr-type G domain in the interval 343–516; that stretch reads SRAPVVTVMG…EVLELTATPT (174 aa). The tract at residues 352 to 359 is G1; it reads GHVDHGKT. 352–359 provides a ligand contact to GTP; the sequence is GHVDHGKT. The segment at 377–381 is G2; that stretch reads GITQH. The interval 398 to 401 is G3; the sequence is DTPG. GTP is bound by residues 398 to 402 and 452 to 455; these read DTPGH and NKID. The interval 452-455 is G4; that stretch reads NKID. The tract at residues 488–490 is G5; that stretch reads SAK.

This sequence belongs to the TRAFAC class translation factor GTPase superfamily. Classic translation factor GTPase family. IF-2 subfamily.

Its subcellular location is the cytoplasm. One of the essential components for the initiation of protein synthesis. Protects formylmethionyl-tRNA from spontaneous hydrolysis and promotes its binding to the 30S ribosomal subunits. Also involved in the hydrolysis of GTP during the formation of the 70S ribosomal complex. This is Translation initiation factor IF-2 from Pseudomonas putida (strain W619).